A 79-amino-acid polypeptide reads, in one-letter code: Acyl carrier protein (79 aa).

The Carrier domain occupies 2 to 77 (SDIEARVKKI…LAIDYAKNNV (76 aa)). O-(pantetheine 4'-phosphoryl)serine is present on Ser37.

Belongs to the acyl carrier protein (ACP) family. Post-translationally, 4'-phosphopantetheine is transferred from CoA to a specific serine of apo-ACP by AcpS. This modification is essential for activity because fatty acids are bound in thioester linkage to the sulfhydryl of the prosthetic group.

The protein resides in the cytoplasm. The protein operates within lipid metabolism; fatty acid biosynthesis. Carrier of the growing fatty acid chain in fatty acid biosynthesis. The protein is Acyl carrier protein of Leptothrix cholodnii (strain ATCC 51168 / LMG 8142 / SP-6) (Leptothrix discophora (strain SP-6)).